The sequence spans 118 residues: UPF0102 protein Nwi_0116 (118 aa).

It belongs to the UPF0102 family.

The chain is UPF0102 protein Nwi_0116 from Nitrobacter winogradskyi (strain ATCC 25391 / DSM 10237 / CIP 104748 / NCIMB 11846 / Nb-255).